The primary structure comprises 236 residues: Ion-translocating oxidoreductase complex subunit E (236 aa).

A run of 6 helical transmembrane segments spans residues alanine 18 to alanine 38, leucine 39 to leucine 59, isoleucine 69 to alanine 89, phenylalanine 92 to isoleucine 112, alanine 128 to leucine 148, and proline 182 to phenylalanine 202. Residues arginine 217–alanine 236 form a disordered region.

This sequence belongs to the NqrDE/RnfAE family. As to quaternary structure, the complex is composed of six subunits: RnfA, RnfB, RnfC, RnfD, RnfE and RnfG.

It is found in the cell inner membrane. Functionally, part of a membrane-bound complex that couples electron transfer with translocation of ions across the membrane. The chain is Ion-translocating oxidoreductase complex subunit E from Edwardsiella ictaluri (strain 93-146).